A 624-amino-acid polypeptide reads, in one-letter code: Hemocyanin E chain (624 aa).

His169, His173, His200, His320, His324, and His360 together coordinate Cu cation. N-linked (GlcNAc...) asparagine glycosylation is present at Asn445. Cys529 and Cys577 are oxidised to a cystine.

The protein belongs to the tyrosinase family. Hemocyanin subfamily. Tarantula hemocyanin is a 24-chain polymer with seven different chains identified. Hemolymph.

Its subcellular location is the secreted. It is found in the extracellular space. Its function is as follows. Hemocyanins are copper-containing oxygen carriers occurring freely dissolved in the hemolymph of many mollusks and arthropods. This is Hemocyanin E chain (HCE) from Aphonopelma sp. (American tarantula).